Here is a 76-residue protein sequence, read N- to C-terminus: UPF0346 protein OEOE_1017 (76 aa).

This sequence belongs to the UPF0346 family.

The protein is UPF0346 protein OEOE_1017 of Oenococcus oeni (strain ATCC BAA-331 / PSU-1).